The sequence spans 183 residues: Dual-action ribosomal maturation protein DarP (183 aa).

It belongs to the DarP family.

Its subcellular location is the cytoplasm. Member of a network of 50S ribosomal subunit biogenesis factors which assembles along the 30S-50S interface, preventing incorrect 23S rRNA structures from forming. Promotes peptidyl transferase center (PTC) maturation. The protein is Dual-action ribosomal maturation protein DarP of Shigella flexneri serotype 5b (strain 8401).